The sequence spans 138 residues: Basic phospholipase A2 BP-II (138 aa).

A signal peptide spans 1–16 (MRTLWIMAVLLVGVDG). 7 disulfides stabilise this stretch: cysteine 42/cysteine 132, cysteine 44/cysteine 60, cysteine 59/cysteine 112, cysteine 65/cysteine 138, cysteine 66/cysteine 105, cysteine 73/cysteine 98, and cysteine 91/cysteine 103. The Ca(2+) site is built by glycine 45 and glycine 47. Residue histidine 63 is part of the active site. Aspartate 106 is an active-site residue.

Belongs to the phospholipase A2 family. Group II subfamily. K49 sub-subfamily. As to quaternary structure, exists as a monomer in both solution and crystal states. In the presence of SDS or probably in the presence of phospholipids, assembles to form SDS-resistant stable oligomers. Ca(2+) is required as a cofactor. Expressed by the venom gland.

It localises to the secreted. The catalysed reaction is a 1,2-diacyl-sn-glycero-3-phosphocholine + H2O = a 1-acyl-sn-glycero-3-phosphocholine + a fatty acid + H(+). In terms of biological role, snake venom phospholipase A2 (PLA2) that shows anticoagulant activities, strong myolytic activity, infiltration of polymorphonuclear cells, and edema in stromal tissues. Induces cell death of Jurkat cells in a concentration-dependent manner. Shows a low phospholipase A2 activity. PLA2 catalyzes the calcium-dependent hydrolysis of the 2-acyl groups in 3-sn-phosphoglycerides. The sequence is that of Basic phospholipase A2 BP-II from Protobothrops flavoviridis (Habu).